A 209-amino-acid chain; its full sequence is Thymidylate kinase (209 aa).

13–20 is a binding site for ATP; it reads GLEGAGKS.

This sequence belongs to the thymidylate kinase family.

It carries out the reaction dTMP + ATP = dTDP + ADP. Its function is as follows. Phosphorylation of dTMP to form dTDP in both de novo and salvage pathways of dTTP synthesis. This Shewanella sp. (strain MR-4) protein is Thymidylate kinase.